The sequence spans 333 residues: 4-hydroxy-3-methylbut-2-enyl diphosphate reductase (333 aa).

Cys34 lines the [4Fe-4S] cluster pocket. His63 and His96 together coordinate (2E)-4-hydroxy-3-methylbut-2-enyl diphosphate. Dimethylallyl diphosphate is bound by residues His63 and His96. 2 residues coordinate isopentenyl diphosphate: His63 and His96. Cys118 contacts [4Fe-4S] cluster. (2E)-4-hydroxy-3-methylbut-2-enyl diphosphate is bound at residue His146. Residue His146 participates in dimethylallyl diphosphate binding. His146 is an isopentenyl diphosphate binding site. Glu148 acts as the Proton donor in catalysis. Residue Thr186 participates in (2E)-4-hydroxy-3-methylbut-2-enyl diphosphate binding. Cys216 provides a ligand contact to [4Fe-4S] cluster. (2E)-4-hydroxy-3-methylbut-2-enyl diphosphate contacts are provided by Ser244, Ser245, Asn246, and Ser289. Residues Ser244, Ser245, Asn246, and Ser289 each coordinate dimethylallyl diphosphate. 4 residues coordinate isopentenyl diphosphate: Ser244, Ser245, Asn246, and Ser289.

Belongs to the IspH family. Requires [4Fe-4S] cluster as cofactor.

It catalyses the reaction isopentenyl diphosphate + 2 oxidized [2Fe-2S]-[ferredoxin] + H2O = (2E)-4-hydroxy-3-methylbut-2-enyl diphosphate + 2 reduced [2Fe-2S]-[ferredoxin] + 2 H(+). The enzyme catalyses dimethylallyl diphosphate + 2 oxidized [2Fe-2S]-[ferredoxin] + H2O = (2E)-4-hydroxy-3-methylbut-2-enyl diphosphate + 2 reduced [2Fe-2S]-[ferredoxin] + 2 H(+). Its pathway is isoprenoid biosynthesis; dimethylallyl diphosphate biosynthesis; dimethylallyl diphosphate from (2E)-4-hydroxy-3-methylbutenyl diphosphate: step 1/1. It functions in the pathway isoprenoid biosynthesis; isopentenyl diphosphate biosynthesis via DXP pathway; isopentenyl diphosphate from 1-deoxy-D-xylulose 5-phosphate: step 6/6. Catalyzes the conversion of 1-hydroxy-2-methyl-2-(E)-butenyl 4-diphosphate (HMBPP) into a mixture of isopentenyl diphosphate (IPP) and dimethylallyl diphosphate (DMAPP). Acts in the terminal step of the DOXP/MEP pathway for isoprenoid precursor biosynthesis. The chain is 4-hydroxy-3-methylbut-2-enyl diphosphate reductase from Mycobacterium sp. (strain JLS).